The following is a 444-amino-acid chain: Prenyltransferase phnF (444 aa).

It belongs to the tryptophan dimethylallyltransferase family.

The catalysed reaction is 2,3,4,7,9-pentahydroxy-6-methyl-1H-phenalen-1-one + dimethylallyl diphosphate = 2,4,7,9-tetrahydroxy-6-methyl-8-(2-methylbut-3-en-2-yl)-1-oxo-1H-phenalen-3-ol + diphosphate. It functions in the pathway secondary metabolite biosynthesis. Functionally, prenyltransferase; part of the gene cluster that mediates the biosynthesis of phenalenones such as herqueinone, compounds that have been reported to treat tumors, bacterial infections and/or mycoses, and rheumatic diseases. The non-reducing polyketide synthase phnA synthesizes the heptaketide backbone and cyclizes it into the angular, hemiketal-containing naphtho-gamma-pyrone prephenalenone. The product template (PT) domain of phnA catalyzes only the C4-C9 aldol condensation, which is unprecedented among known PT domains. The transformation of prephenalenone to phenalenones requires an FAD-dependent monooxygenase phnB, which catalyzes the C2 aromatic hydroxylation of prephenalenone and ring opening of the gamma-pyrone ring simultaneously. Subsequent intramolecular deprotonation of C3 phenolic oxygen accelerates phenalenone ring closure to yield the tricyclic phenalenone core with a C2 hydroxylation. The prenyltransferase phnF further catalyzes reverse C-prenylation of phenalenone by direct electrophilic substitution at C6, or possibly via first a forward O-prenylation of a neighboring phenol in phenalenone, followed by a Claisen rearrangement. The hydroalkoxylation enzyme phnH catalyzes the 5-exo-trig cyclization via acid catalysis after the spontaneous deprotonation of 7-OH, which leads to the formation of the dihydrobenzofuran atrovenetin. Atrovenetin is further converted to deoxyherqueinone by the O-methyltransferase phnC which can methylate C2-OH to stabilize the northern portion of the phenalenone core. Finally, the oxidoreductase phnG converts deoxyherqueinone to herqueinone via C6 hydroxylation. The sequence is that of Prenyltransferase phnF from Penicillium herquei.